A 74-amino-acid polypeptide reads, in one-letter code: Brevinin-2MT1 (74 aa).

A signal peptide spans 1–22 (MFTMKKSLLVLFFLGTISLSLC). A propeptide spans 23-39 (EEERNADEDDGEMTEEE) (removed in mature form). Cysteines 68 and 74 form a disulfide.

This sequence belongs to the frog skin active peptide (FSAP) family. Brevinin subfamily. Expressed by the skin glands.

Its subcellular location is the secreted. In terms of biological role, antimicrobial peptide. Active against a variety of Gram-negative and Gram-positive bacterial strains. Active against fungi. Shows hemolytic activity against human erythrocytes. This Amolops mantzorum (Sichuan torrent frog) protein is Brevinin-2MT1.